A 302-amino-acid chain; its full sequence is Decaprenyl-phosphate phosphoribosyltransferase (302 aa).

Residue lysine 28 coordinates 5-phospho-alpha-D-ribose 1-diphosphate. 2 helical membrane passes run 30 to 50 (VLVL…DYVE) and 55 to 75 (VSMA…VNDV). Tyrosine 70 provides a ligand contact to 5-phospho-alpha-D-ribose 1-diphosphate. Mg(2+)-binding residues include asparagine 73 and aspartate 77. Residue lysine 87 participates in 5-phospho-alpha-D-ribose 1-diphosphate binding. The next 2 helical transmembrane spans lie at 100 to 120 (WLAY…AWML) and 122 to 142 (PNLA…CFGL). Positions 143 and 160 each coordinate 5-phospho-alpha-D-ribose 1-diphosphate. The next 2 membrane-spanning stretches (helical) occupy residues 146-166 (AVVE…AGGV) and 170-190 (IPLS…MVAG). Position 191 (lysine 191) interacts with trans,octa-cis-decaprenyl phosphate. 3 helical membrane passes run 218-238 (LRFV…LWAF), 244-264 (SGSW…RYAV), and 282-302 (RVLQ…VAFG).

This sequence belongs to the UbiA prenyltransferase family. DPPR synthase subfamily. In terms of assembly, homotrimer. Mg(2+) serves as cofactor.

Its subcellular location is the cell inner membrane. It catalyses the reaction trans,octa-cis-decaprenyl phosphate + 5-phospho-alpha-D-ribose 1-diphosphate + H(+) = trans,octa-cis-decaprenylphospho-beta-D-ribofuranose 5-phosphate + diphosphate. It functions in the pathway cell wall biogenesis; cell wall polysaccharide biosynthesis. Functionally, involved in the biosynthesis of decaprenylphosphoryl arabinose (DPA) a precursor for arabinan synthesis in mycobacterial cell wall biosynthesis. Catalyzes the transfer of a 5-phosphoribosyl residue from phosphoribose diphosphate (PRPP) to decaprenyl phosphate (DP) to form decaprenylphosphoryl-5-phosphoribose (DPPR). The protein is Decaprenyl-phosphate phosphoribosyltransferase of Mycobacterium tuberculosis (strain CDC 1551 / Oshkosh).